The sequence spans 431 residues: tRNA-2-methylthio-N(6)-dimethylallyladenosine synthase (431 aa).

In terms of domain architecture, MTTase N-terminal spans 2-117; it reads KKLFIETLGC…ITEVVDKKHA (116 aa). 6 residues coordinate [4Fe-4S] cluster: Cys-11, Cys-48, Cys-80, Cys-149, Cys-153, and Cys-156. Positions 135–368 constitute a Radical SAM core domain; the sequence is RTNPFKAMVN…QTRHTEILDE (234 aa). The TRAM domain occupies 371 to 431; it reads DAQLGKVHEV…SRGALDGVLV (61 aa).

Belongs to the methylthiotransferase family. MiaB subfamily. In terms of assembly, monomer. [4Fe-4S] cluster serves as cofactor.

Its subcellular location is the cytoplasm. The enzyme catalyses N(6)-dimethylallyladenosine(37) in tRNA + (sulfur carrier)-SH + AH2 + 2 S-adenosyl-L-methionine = 2-methylsulfanyl-N(6)-dimethylallyladenosine(37) in tRNA + (sulfur carrier)-H + 5'-deoxyadenosine + L-methionine + A + S-adenosyl-L-homocysteine + 2 H(+). Catalyzes the methylthiolation of N6-(dimethylallyl)adenosine (i(6)A), leading to the formation of 2-methylthio-N6-(dimethylallyl)adenosine (ms(2)i(6)A) at position 37 in tRNAs that read codons beginning with uridine. The protein is tRNA-2-methylthio-N(6)-dimethylallyladenosine synthase of Sulfurovum sp. (strain NBC37-1).